Reading from the N-terminus, the 1260-residue chain is Paraclostridial mosquitocidal protein 1 (1260 aa).

Histidine 208 is a Zn(2+) binding site. Glutamate 209 serves as the catalytic Proton acceptor. Zn(2+) contacts are provided by histidine 212 and glutamate 248. A disulfide bond links cysteine 395 and cysteine 406. A translocation domain (TD) region spans residues 401-824 (NRVNICIDVN…NIQSIPDFDI (424 aa)). Positions 825-1065 (NALIDRLGIQ…SYFNSNILRD (241 aa)) are HCN. The interval 1066 to 1260 (FWGEPLEYNK…FVSEDEGWKE (195 aa)) is HCC.

It belongs to the peptidase M27 family. The cofactor is Zn(2+).

The enzyme catalyses Limited hydrolysis of proteins of the neuroexocytosis apparatus, synaptobrevins, SNAP25 or syntaxin. No detected action on small molecule substrates.. With respect to regulation, preincubation with the metalloprotease inhibitor 1,10-phenanthroline before injection into Anopheles or Aedes decreases toxicity. Functionally, neurotoxin active against Anopheles but not Aedes mosquitoes upon oral ingestion; expression of the ptox operon (ntnh-orfX1-orfX2-orfX3-pmp1) in B.thuringiensis kills Anopheles but not Aedes mosquito 3rd instar larvae. The ntnh-pmp1 construct is about half as toxic. PMP1 is toxic when injected directly into Anopheles or Aedes mosquito 3rd instar larvae, larvae no longer move, suggesting they are paralyzed. Adult mosquitoes (Anopheles or Aedes) and Drosophila lose the ability to fly in a dose-dependent manner by 24 hours after injection with 100 pg neurotoxin. Not toxic upon injection in mice. In terms of biological role, neurotoxin that cleaves A.gambiae syntaxin 1a, probably hydrolyzing the '240-Glu-|-His-241' bond. Does not cleave A.gambiae n-synaptobrevin or SNAP-25, nor human syntaxin 1A. Responsible for host epithelial cell transcytosis, host nerve cell targeting and translocation of PMP1 light chain (LC) into host cytosol. Composed of 3 subdomains; the translocation domain (TD), and N-terminus and C-terminus of the receptor-binding domain (RBD), called HCN and HCC. The chain is Paraclostridial mosquitocidal protein 1 from Paraclostridium bifermentans (Clostridium bifermentans).